Reading from the N-terminus, the 51-residue chain is Ovomucoid (51 aa).

In terms of domain architecture, Kazal-like spans 3 to 51 (VDCSGYPKPACTLEYFPLCGSDNQTYANKCTFCNAVVEKNVTLNHLGEC). Cystine bridges form between C5-C35, C13-C32, and C21-C51. N-linked (GlcNAc...) asparagine glycosylation is present at N42.

The protein resides in the secreted. The polypeptide is Ovomucoid (Nothoprocta perdicaria (Chilean tinamou)).